Reading from the N-terminus, the 269-residue chain is JmjC domain-containing protein 8 (269 aa).

The first 24 residues, 1 to 24 (MAAAGRFGLLLLIVLWTMVTVVLP), serve as a signal peptide directing secretion. N-linked (GlcNAc...) asparagine glycosylation is found at asparagine 135, asparagine 145, and asparagine 214. The 123-residue stretch at 147-269 (TEWAPLFQHY…TSVFISTFLG (123 aa)) folds into the JmjC domain.

As to quaternary structure, oligomer. Dimer. Interacts with PKM; regulates angiogenesis and metabolism. N-glycosylated.

It is found in the endoplasmic reticulum lumen. The protein localises to the cytoplasm. Functionally, functions as a positive regulator of TNF-induced NF-kappaB signaling. Regulates angiogenesis and cellular metabolism through interaction with PKM. In Rattus norvegicus (Rat), this protein is JmjC domain-containing protein 8.